A 253-amino-acid chain; its full sequence is Acidic endochitinase pcht28 (253 aa).

Residues 1–24 (MKFNIVSPVALSCLFFLFLTGTLA) form the signal peptide. Glu-92 serves as the catalytic Proton donor. Cys-212 and Cys-244 are disulfide-bonded.

Belongs to the glycosyl hydrolase 19 family. Chitinase class II subfamily.

It localises to the secreted. The protein localises to the extracellular space. The enzyme catalyses Random endo-hydrolysis of N-acetyl-beta-D-glucosaminide (1-&gt;4)-beta-linkages in chitin and chitodextrins.. Functionally, defense against chitin-containing fungal pathogens. In Solanum chilense (Tomato), this protein is Acidic endochitinase pcht28.